The sequence spans 488 residues: NADH-ubiquinone oxidoreductase chain 2 (488 aa).

14 consecutive transmembrane segments (helical) span residues M11–I31, M38–I58, E74–F94, I106–E126, N129–L149, L162–I182, I211–L231, G239–I259, I271–V291, V299–V319, I331–V351, I376–F396, I412–K434, and I460–I480.

This sequence belongs to the complex I subunit 2 family.

Its subcellular location is the mitochondrion inner membrane. The enzyme catalyses a ubiquinone + NADH + 5 H(+)(in) = a ubiquinol + NAD(+) + 4 H(+)(out). In terms of biological role, core subunit of the mitochondrial membrane respiratory chain NADH dehydrogenase (Complex I) that is believed to belong to the minimal assembly required for catalysis. Complex I functions in the transfer of electrons from NADH to the respiratory chain. The immediate electron acceptor for the enzyme is believed to be ubiquinone. This Dictyostelium discoideum (Social amoeba) protein is NADH-ubiquinone oxidoreductase chain 2 (nad2).